The chain runs to 436 residues: Glutamyl-tRNA reductase (436 aa).

Substrate contacts are provided by residues 56–59 (TCNR), serine 114, 119–121 (EAQ), and glutamine 125. Cysteine 57 acts as the Nucleophile in catalysis. 194–199 (GAGEMI) provides a ligand contact to NADP(+).

It belongs to the glutamyl-tRNA reductase family. Homodimer.

It catalyses the reaction (S)-4-amino-5-oxopentanoate + tRNA(Glu) + NADP(+) = L-glutamyl-tRNA(Glu) + NADPH + H(+). It participates in porphyrin-containing compound metabolism; protoporphyrin-IX biosynthesis; 5-aminolevulinate from L-glutamyl-tRNA(Glu): step 1/2. Its function is as follows. Catalyzes the NADPH-dependent reduction of glutamyl-tRNA(Glu) to glutamate 1-semialdehyde (GSA). This is Glutamyl-tRNA reductase from Acidovorax sp. (strain JS42).